The following is a 381-amino-acid chain: Ubiquitin-associated protein 1-like (381 aa).

Residues 4-50 form the UMA domain; it reads LDGVPFKLPKGFVIGTEPLPGPELSVPACGEVLLGSMHDFSLERTAL. Disordered regions lie at residues 87–141 and 185–228; these read LAPA…PGRR and SLCP…LRSH. The span at 95 to 104 shows a compositional bias: basic and acidic residues; it reads RDPEAGHQER. Residues 105 to 123 show a composition bias toward acidic residues; the sequence is PEEEGEDEAEASSGSEEEP. A compositionally biased stretch (low complexity) spans 124 to 141; sequence APSSLQPGSPASPGPGRR. Over residues 197 to 216 the composition is skewed to pro residues; it reads ASPPGPAPQHPAAPASPPRP.

This is Ubiquitin-associated protein 1-like (UBAP1L) from Homo sapiens (Human).